Consider the following 348-residue polypeptide: Peptide-N(4)-(N-acetyl-beta-glucosaminyl)asparagine amidase (348 aa).

Residues cysteine 116, cysteine 119, cysteine 151, and cysteine 154 each coordinate Zn(2+). Cysteine 177 (nucleophile) is an active-site residue. Catalysis depends on residues histidine 204 and aspartate 221. A substrate-binding site is contributed by glutamate 224. Residues 311–348 (PSATPTKEMQKLKISKTGNKGRISGSAEWKESRGENGK) are disordered. Over residues 338–348 (EWKESRGENGK) the composition is skewed to basic and acidic residues.

It belongs to the transglutaminase-like superfamily. PNGase family. The cofactor is Zn(2+).

Its subcellular location is the cytoplasm. It catalyses the reaction Hydrolysis of an N(4)-(acetyl-beta-D-glucosaminyl)asparagine residue in which the glucosamine residue may be further glycosylated, to yield a (substituted) N-acetyl-beta-D-glucosaminylamine and a peptide containing an aspartate residue.. Specifically deglycosylates the denatured form of N-linked glycoproteins in the cytoplasm and assists their proteasome-mediated degradation. Cleaves the beta-aspartyl-glucosamine (GlcNAc) of the glycan and the amide side chain of Asn, converting Asn to Asp. Prefers proteins containing high-mannose over those bearing complex type oligosaccharides. Can recognize misfolded proteins in the endoplasmic reticulum that are exported to the cytosol to be destroyed and deglycosylate them, while it has no activity toward native proteins. Deglycosylation is a prerequisite for subsequent proteasome-mediated degradation of some, but not all, misfolded glycoproteins. The protein is Peptide-N(4)-(N-acetyl-beta-glucosaminyl)asparagine amidase (PNG1) of Candida glabrata (strain ATCC 2001 / BCRC 20586 / JCM 3761 / NBRC 0622 / NRRL Y-65 / CBS 138) (Yeast).